The following is a 77-amino-acid chain: MARVCDVTGKKPMVGNNVSHANNKTRRRFLPNLQYRRFWVETENRWVRLRVSSAALRLIDKNGIDAVLADLRARGQA.

Belongs to the bacterial ribosomal protein bL28 family.

The protein is Large ribosomal subunit protein bL28 of Verminephrobacter eiseniae (strain EF01-2).